The primary structure comprises 293 residues: Energy-coupling factor transporter ATP-binding protein EcfA2 (293 aa).

Positions 3–246 (ITFQKVEHRY…ADELEKIGVD (244 aa)) constitute an ABC transporter domain. 40-47 (GHTGSGKS) contributes to the ATP binding site.

This sequence belongs to the ABC transporter superfamily. Energy-coupling factor EcfA family. As to quaternary structure, forms a stable energy-coupling factor (ECF) transporter complex composed of 2 membrane-embedded substrate-binding proteins (S component), 2 ATP-binding proteins (A component) and 2 transmembrane proteins (T component).

It is found in the cell membrane. In terms of biological role, ATP-binding (A) component of a common energy-coupling factor (ECF) ABC-transporter complex. Unlike classic ABC transporters this ECF transporter provides the energy necessary to transport a number of different substrates. This is Energy-coupling factor transporter ATP-binding protein EcfA2 from Bacillus cereus (strain ATCC 10987 / NRS 248).